Reading from the N-terminus, the 1002-residue chain is Calcium-transporting ATPase sarcoplasmic/endoplasmic reticulum type (1002 aa).

Residues 1 to 48 lie on the Cytoplasmic side of the membrane; sequence MEDGHSKTVEQSLNFFGTDGERGLTLDQIKTNQAKYGPNELPTEEGKS. A helical membrane pass occupies residues 49–69; that stretch reads IWQLVLEQFDDLLVKILLLAA. Topologically, residues 70-89 are lumenal; the sequence is IISFVLALFEEHEETFTAFV. Residues 90–110 traverse the membrane as a helical segment; sequence EPLVILLILIANAVVGVWQER. The Cytoplasmic portion of the chain corresponds to 111–253; that stretch reads NAESAIEALK…EIKTPLQQKL (143 aa). A helical transmembrane segment spans residues 254-273; the sequence is DEFGEQLSKVISVICVAVWA. The Lumenal segment spans residues 274-295; the sequence is INIGHFNDPAHGGSWIKGAIYY. Residues 296–313 traverse the membrane as a helical segment; that stretch reads FKIAVALAVAAIPEGLPA. Ca(2+) contacts are provided by Val304, Ala305, Ile307, and Glu309. The Cytoplasmic segment spans residues 314–757; that stretch reads VITTCLALGT…EEGRAIYNNM (444 aa). The active-site 4-aspartylphosphate intermediate is Asp351. 2 residues coordinate Mg(2+): Asp703 and Asp707. The helical transmembrane segment at 758 to 777 threads the bilayer; it reads KQFIRYLISSNIGEVVSIFL. Ca(2+) contacts are provided by Asn768 and Glu771. Residues 778–787 are Lumenal-facing; the sequence is TAALGLPEAL. Residues 788–808 form a helical membrane-spanning segment; that stretch reads IPVQLLWVNLVTDGLPATALG. 3 residues coordinate Ca(2+): Asn796, Thr799, and Asp800. At 809 to 828 the chain is on the cytoplasmic side; that stretch reads FNPPDLDIMDKPPRKADEGL. A helical transmembrane segment spans residues 829 to 851; sequence ISGWLFFRYMAIGFYVGAATVGA. Topologically, residues 852–897 are lumenal; sequence AAWWFIASSEGPGLTYWQLTHHLSCLGGGDEFKGVDCKIFSDPKAM. A helical transmembrane segment spans residues 898-917; the sequence is TMALSVLVTIEMLNAMNSLS. Glu908 contributes to the Ca(2+) binding site. At 918 to 930 the chain is on the cytoplasmic side; sequence ENQSLISMPPWCN. A helical transmembrane segment spans residues 931–949; sequence LWLIGSMALSFTLHFVILY. The Lumenal portion of the chain corresponds to 950-964; that stretch reads VDVLSTVFQVTPLSA. The chain crosses the membrane as a helical span at residues 965-985; sequence EEWITVMKFSIPVVLLDETLK. At 986–1002 the chain is on the cytoplasmic side; the sequence is FVARKIADVPDAVVDKW.

This sequence belongs to the cation transport ATPase (P-type) (TC 3.A.3) family.

The protein resides in the endoplasmic reticulum membrane. It is found in the sarcoplasmic reticulum membrane. It catalyses the reaction Ca(2+)(in) + ATP + H2O = Ca(2+)(out) + ADP + phosphate + H(+). Functionally, this magnesium-dependent enzyme catalyzes the hydrolysis of ATP coupled with the transport of calcium. In Drosophila pseudoobscura pseudoobscura (Fruit fly), this protein is Calcium-transporting ATPase sarcoplasmic/endoplasmic reticulum type.